The chain runs to 458 residues: Chitin deacetylase 2 (458 aa).

Residues 1-51 form the signal peptide; that stretch reads MIPSTAAAALLTLTAGVALAHPGCGGQEIGRRNVGGPMVYRRDVTDEASAA. Residues asparagine 87, asparagine 99, and asparagine 125 are each glycosylated (N-linked (GlcNAc...) asparagine). In terms of domain architecture, NodB homology spans 158-348; sequence MTWGLGFDDG…IKSAFSYIVP (191 aa). The active-site Proton acceptor is aspartate 165. Aspartate 165 contributes to the acetate binding site. Co(2+) is bound at residue aspartate 166. Asparagine 169 carries an N-linked (GlcNAc...) asparagine glycan. 2 residues coordinate Co(2+): histidine 215 and histidine 219. Tyrosine 256 is an acetate binding site. Asparagine 271 and asparagine 309 each carry an N-linked (GlcNAc...) asparagine glycan. The active-site Proton donor is histidine 322. Residues asparagine 326, asparagine 354, asparagine 363, asparagine 378, and asparagine 393 are each glycosylated (N-linked (GlcNAc...) asparagine). The segment at 382-430 is disordered; it reads STTQKDGSSSTNTSSSGSGSAAGSASATSSSDDSSSSGSASASSSSSNA. Residue serine 427 is the site of GPI-anchor amidated serine attachment. The propeptide at 428–458 is removed in mature form; sequence SNASSGALGMFDGLSGVGLVLSGVVAGVMLL. Asparagine 429 is a glycosylation site (N-linked (GlcNAc...) asparagine).

It belongs to the polysaccharide deacetylase family. Co(2+) is required as a cofactor. Glycosylated.

The protein resides in the secreted. It localises to the cell wall. It is found in the cell membrane. It carries out the reaction [(1-&gt;4)-N-acetyl-beta-D-glucosaminyl](n) + n H2O = chitosan + n acetate. Hydrolyzes the N-acetamido groups of N-acetyl-D-glucosamine residues in chitin to form chitosan and acetate. Chitosan is required to anchor melanin to the cell wall, for maintenance of cell wall integrity, and for cytokinesis. The chain is Chitin deacetylase 2 from Cryptococcus neoformans var. neoformans serotype D (strain B-3501A) (Filobasidiella neoformans).